A 922-amino-acid chain; its full sequence is MARVLAQSLSVPGLVAGHKDSQHKGSGKSKRSVKTMCALRTSGLRMSGFSGLRTFNHLNTMMRPGLDFHSKVSKAVSSRRARAKRFIPRAMFERFTEKAIKVIMLAQEEARRLGHNFVGTEQILLGLIGEGTGIAAKVLKSMGINLKDARVEVEKIIGRGSGFVAVEIPFTPRAKRVLELSQEEARQLGHNYIGSEHLLLGLLREGEGVAARVLENLGADPTNIRTQVIRMVGESADSVTATVGSGSSNNKTPTLEEYGTNLTKLAEEGKLDPVVGRQPQIERVTQILGRRTKNNPCLIGEPGVGKTAIAEGLAQRIANGDVPETIEGKKVITLDMGLLVAGTKYRGEFEERLKKLMEEIKQSDDIILFIDEVHTLIGAGAAEGAIDAANILKPALARGELQCIGATTLDEYRKHIEKDPDLERRFQPVKVPEPTVDETIQILKGLRERYEIHHKLRYTDEALIAAAQLSYQYISDRFLPDKAIDLVDEAGSRVRLQHAQLPEEAKELDKEVRKIVKEKEEYVRNQDFEKAGELRDKEMDLKAQISALIEKGKEMSKAETETADEGPIVTEVDIQHIVSSWTGIPVDKVSADESDRLLKMEDTLHKRIIGQDEAVQAISRAIRRARVGLKNPNRPIASFIFSGPTGVGKSELAKALAAYYFGSEEAMIRLDMSEFMERHTVSKLIGSPPGYVGYTEGGQLTEAVRRRPYTVVLFDEIEKAHPDVFNMMLQILEDGRLTDSKGRTVDFKNTLLIMTSNVGSSVIEKGGRRIGFDLDYDEKDSSYNRIKSLVTEELKQYFRPEFLNRLDEMIVFRQLTKLEVKEIADIMLKEVFQRLKTKEIELQVTERFRDRVVDEGYNPSYGARPLRRAIMRLLEDSMAEKMLAREIKEGDSVIVDVDSDGKVIVLNGSSGTPESLPEALSI.

A chloroplast-targeting transit peptide spans Met1 to Val72. In terms of domain architecture, Clp R spans Phe92–Glu234. Repeat regions lie at residues Phe95–Gly160 and Phe170–Glu234. An i region spans residues Leu255–Pro502. Residue Gly300–Thr307 coordinates ATP. A UVR domain is found at Asp509 to Gln544. Positions Val569–Ser760 are II. Gly643–Ser650 is a binding site for ATP.

This sequence belongs to the ClpA/ClpB family. ClpC subfamily.

It is found in the plastid. The protein localises to the chloroplast. Functionally, molecular chaperone that may interact with a ClpP-like protease involved in degradation of denatured proteins in the chloroplast. The protein is Chaperone protein ClpC, chloroplastic of Pisum sativum (Garden pea).